Consider the following 348-residue polypeptide: 2-heptyl-4(1H)-quinolone synthase subunit PqsC (348 aa).

Cys-129 acts as the Acyl-thioester intermediate in catalysis. Residue His-269 is part of the active site.

This sequence belongs to the thiolase-like superfamily. FabH family. As to quaternary structure, forms a tight complex with PqsB.

The protein resides in the cytoplasm. The enzyme catalyses (2-aminobenzoyl)acetate + octanoyl-CoA + H(+) = 2-heptyl-4(1H)-quinolone + CO2 + CoA + H2O. Folding of PqsC and binding of octanoate are promoted by PqsB. Binding of the octanoyl group probably increases the binding affinity of the complex for 2-ABA. Activity of the complex is inhibited by 2-aminoacetophenone (2-AA). In terms of biological role, required for the biosynthesis of the quorum-sensing signaling molecules 2-heptyl-4(1H)-quinolone (HHQ) and 2-heptyl-3-hydroxy-4(1H)-quinolone (Pseudomonas quinolone signal or PQS), which are important for biofilm formation and virulence. The PqsC/PqsB complex catalyzes the condensation of 2-aminobenzoylacetate (2-ABA) and octanoyl-CoA to form HHQ. First, PqsC acquires an octanoyl group from octanoyl-CoA and forms an octanoyl-PqsC intermediate. Then, together with PqsB, it catalyzes the coupling of 2-ABA with the octanoate group, leading to decarboxylation and dehydration, and resulting in closure of the quinoline ring. This chain is 2-heptyl-4(1H)-quinolone synthase subunit PqsC, found in Pseudomonas aeruginosa (strain ATCC 15692 / DSM 22644 / CIP 104116 / JCM 14847 / LMG 12228 / 1C / PRS 101 / PAO1).